Here is a 194-residue protein sequence, read N- to C-terminus: ATP synthase subunit 5, mitochondrial (194 aa).

F-type ATP synthases have 2 components, the catalytic core F(1) and the membrane-embedded component F(0), linked together by a central stalk and a peripheral stalk. The central stalk, also called rotor shaft, is often seen as part of F(1). The peripheral stalk is seen as part of F(0). F(0) contains the membrane channel next to the rotor. F-type ATP synthases form dimers but each monomer functions independently in ATP generation. The dimer consists of 18 different polypeptides: ATP1 (subunit alpha, part of F(1), 3 molecules per monomer), ATP2 (subunit beta, part of F(1), 3 molecules per monomer), ATP3 (subunit gamma, part of the central stalk), ATP4 (subunit b, part of the peripheral stalk), ATP5/OSCP (subunit 5/OSCP, part of the peripheral stalk), ATP6 (subunit a, part of the peripheral stalk), ATP7 (subunit d, part of the peripheral stalk), ATP8 (subunit 8, part of the peripheral stalk), OLI1 (subunit c, part of the rotor, 10 molecules per monomer), ATP14 (subunit h, part of the peripheral stalk), ATP15 (subunit epsilon, part of the central stalk), ATP16 (subunit delta, part of the central stalk), ATP17 (subunit f, part of the peripheral stalk), ATP18 (subunit i/j, part of the peripheral stalk). Dimer-specific subunits are ATP19 (subunit k, at interface between monomers), ATP20 (subunit g, at interface between monomers), TIM11 (subunit e, at interface between monomers). Also contains subunit L.

It is found in the mitochondrion inner membrane. Functionally, mitochondrial membrane ATP synthase (F(1)F(0) ATP synthase or Complex V) produces ATP from ADP in the presence of a proton gradient across the membrane which is generated by electron transport complexes of the respiratory chain. F-type ATP synthases consist of two structural domains, F(1) - containing the extramembraneous catalytic core, and F(0) - containing the membrane proton channel, linked together by a central stalk and a peripheral stalk. During catalysis, ATP synthesis in the catalytic domain of F(1) is coupled via a rotary mechanism of the central stalk subunits to proton translocation. Part of the complex F(0) domain and the peripheral stalk, which acts as a stator to hold the catalytic alpha/ATP1(3)beta/ATP2(3) subcomplex and subunit a/ATP6 static relative to the rotary elements. The chain is ATP synthase subunit 5, mitochondrial from Pichia angusta (Yeast).